The sequence spans 284 residues: Pheromone-regulated membrane protein 4 (284 aa).

The chain crosses the membrane as a helical span at residues 20 to 38; it reads IISLTLVLLGVFSFLLLTW. One can recognise a Glutaredoxin domain in the interval 157–272; it reads RTDFLDIIRT…PLLKSEARGN (116 aa).

The protein resides in the membrane. The protein is Pheromone-regulated membrane protein 4 (PRM4) of Saccharomyces cerevisiae (strain ATCC 204508 / S288c) (Baker's yeast).